The sequence spans 727 residues: MGRRAKMVEKVKTLMEKHDQIRNMGICAHIDHGKTTLSDNLLAGAGMISKELAGDQLALDFDEEEAARGITIYAANVSMVHEYNGKEYLINLIDTPGHVDFGGDVTRAMRAIDGAVVVCCAVEGVMPQTETVLRQALKEKVKPVLFINKVDRLINELKLTPEELQGRFMKIIAEVNKLIEKMAPEEFKKDWLCDVVTGKVAFGSAYNNWAISVPYMQRSGISFKDIIDYCEQEKQGELADRAPLHEVILDMAITHLPNPLQAQKYRIPNIWKGDSESTIGKSMVACDPNGPLAGVVTKIIVDKHAGAISACRLFSGRIKQGDDLYLVGSKQKARAQQVSIFMGAERVQVPSISAGNICALTGLREATAGETVCSPSEILEPGFESLTHTSEPVITVAIEAKNTKDLPKLIEILRQIAREDNTVRVEINEETGEHLISGMGELHIEVITNTKIGRDGGIEVDVGEPIVVYRETITGTSPEIEGKSPNKHNKLYMIAEPMDESVYAAYVEGKIHDEDYKKKTTADGEARLVEAGLEKEQAKRVMSIYNGNMIVNMTRGIVQLDEARELIIEGFKEGVRNGPLAAEKVQGVKIRLVDATFHEDAIHRGPAQIIPAVRFGVRDAVAQAKPVLLEPMQSVYINTPQDYMGDGMKEINNRRGQILDMEQEGDMSIIKSSVPVAEMFGFAGAIRGATQGRCLWSVEFSGFERVPAELQPKIAKQIRDRKGLKSE.

The tr-type G domain occupies 19 to 260 (DQIRNMGICA…MAITHLPNPL (242 aa)). Residues 28–35 (AHIDHGKT), 94–98 (DTPGH), and 148–151 (NKVD) each bind GTP. A Diphthamide modification is found at His-603.

It belongs to the TRAFAC class translation factor GTPase superfamily. Classic translation factor GTPase family. EF-G/EF-2 subfamily.

It is found in the cytoplasm. Its function is as follows. Catalyzes the GTP-dependent ribosomal translocation step during translation elongation. During this step, the ribosome changes from the pre-translocational (PRE) to the post-translocational (POST) state as the newly formed A-site-bound peptidyl-tRNA and P-site-bound deacylated tRNA move to the P and E sites, respectively. Catalyzes the coordinated movement of the two tRNA molecules, the mRNA and conformational changes in the ribosome. The chain is Elongation factor 2 from Methanococcus maripaludis (strain C6 / ATCC BAA-1332).